The primary structure comprises 325 residues: uncharacterized protein (325 aa).

2 stretches are compositionally biased toward polar residues: residues 1–21 (MSYQ…SSSA) and 29–57 (EPFS…SSRA). The segment at 1–325 (MSYQQRANDS…LKTGHHSERY (325 aa)) is disordered. A compositionally biased stretch (basic and acidic residues) spans 86-109 (ESRKKEQSDVRGGDTSYSRRHDDS). Composition is skewed to polar residues over residues 114–167 (NKYS…TTQG) and 174–193 (YSQS…TPSD). Composition is skewed to low complexity over residues 200–210 (YDYSSSGSHTH) and 252–278 (ATDT…QRNA). The span at 282–325 (EDEHVSMGDKMKGNMEKMAGKLTRDPELVQKGEDLKTGHHSERY) shows a compositional bias: basic and acidic residues.

This is an uncharacterized protein from Schizosaccharomyces pombe (strain 972 / ATCC 24843) (Fission yeast).